We begin with the raw amino-acid sequence, 167 residues long: MKGLCVAACTLVLAAATPLTPRENTCTQGSKTPYGALTHSACPCWNWYEIQTGDGDCGKVASKFGVSREDVIRVEPGRVTPPNPLPTPPCNAADAPYPVGKGTVCGCKKWYRIRRGDDCGPVASEFGISADQLIEWNPWLSADVDGTHYPCMNIWPTDNLCVDVSSF.

Positions 1–16 are cleaved as a signal peptide; the sequence is MKGLCVAACTLVLAAA. Residues 109 to 162 enclose the LysM domain; it reads KWYRIRRGDDCGPVASEFGISADQLIEWNPWLSADVDGTHYPCMNIWPTDNLCV.

It belongs to the secreted LysM effector family.

In terms of biological role, might have a role in sequestration of chitin oligosaccharides (breakdown products of fungal cell walls that are released during invasion and act as triggers of host immunity) to dampen host defense. The chain is Secreted LysM effector Blys6 from Beauveria bassiana (strain ARSEF 2860) (White muscardine disease fungus).